We begin with the raw amino-acid sequence, 318 residues long: Cis-3-alkyl-4-alkyloxetan-2-one decarboxylase (318 aa).

In terms of domain architecture, AB hydrolase-1 spans Pro-30–Asp-275.

It belongs to the AB hydrolase superfamily.

The catalysed reaction is a cis-3-alkyl-4-alkyloxetan-2-one = a cis-alkene + CO2. Its function is as follows. Involved in olefin biosynthesis. Catalyzes the elimination of carbon dioxide from beta-lactones to form the final olefin product. The S.oneidensis oleABCD genes produce 3,6,9,12,15,19,22,25,28-hentriacontanonaene, which may aid the cells in adapting to a sudden drop in temperature. The polypeptide is Cis-3-alkyl-4-alkyloxetan-2-one decarboxylase (Shewanella oneidensis (strain ATCC 700550 / JCM 31522 / CIP 106686 / LMG 19005 / NCIMB 14063 / MR-1)).